A 159-amino-acid polypeptide reads, in one-letter code: Ribosomal RNA large subunit methyltransferase H (159 aa).

Residues L76, G108, and 127 to 132 (FGLLTL) each bind S-adenosyl-L-methionine.

This sequence belongs to the RNA methyltransferase RlmH family. In terms of assembly, homodimer.

It is found in the cytoplasm. The enzyme catalyses pseudouridine(1915) in 23S rRNA + S-adenosyl-L-methionine = N(3)-methylpseudouridine(1915) in 23S rRNA + S-adenosyl-L-homocysteine + H(+). Functionally, specifically methylates the pseudouridine at position 1915 (m3Psi1915) in 23S rRNA. This chain is Ribosomal RNA large subunit methyltransferase H, found in Streptococcus pyogenes serotype M5 (strain Manfredo).